The chain runs to 67 residues: Large ribosomal subunit protein bL31 (67 aa).

Zn(2+) is bound by residues Cys16, Cys18, Cys37, and Cys40.

This sequence belongs to the bacterial ribosomal protein bL31 family. Type A subfamily. Part of the 50S ribosomal subunit. It depends on Zn(2+) as a cofactor.

Binds the 23S rRNA. The protein is Large ribosomal subunit protein bL31 of Methylococcus capsulatus (strain ATCC 33009 / NCIMB 11132 / Bath).